Reading from the N-terminus, the 1216-residue chain is Apical endosomal glycoprotein (1216 aa).

An N-terminal signal peptide occupies residues 1–21 (MCLPSCLLSIWVLFMAAQSLG). Over 22–1155 (KTWVPDHCRS…SQGRVAAPVS (1134 aa)) the chain is Extracellular. The LDL-receptor class A 1; truncated domain maps to 27 to 54 (DHCRSPTEATCNFVCDCGDCSDEAQCGF). The MAM 1 domain occupies 62–224 (NTPFTCNFEQ…DDMEFWDCGL (163 aa)). Asparagine 205 is a glycosylation site (N-linked (GlcNAc...) asparagine). Residues 229–269 (ARCPLGHHHCQNKACVEPHQLCDGEDNCGDSSDEDPLICSH) enclose the LDL-receptor class A 2 domain. Intrachain disulfides connect cysteine 231–cysteine 243, cysteine 238–cysteine 256, and cysteine 250–cysteine 267. Positions 268 to 427 (SHHMATDFET…DLIMSNHCIL (160 aa)) constitute an MAM 2 domain. Residues asparagine 291, asparagine 341, and asparagine 368 are each glycosylated (N-linked (GlcNAc...) asparagine). Positions 454 to 491 (RTCDAGHLSCDELCVPPEQLCDFQQHCAEGEDEEKCGT) constitute an LDL-receptor class A 3 domain. 3 disulfide bridges follow: cysteine 456/cysteine 467, cysteine 463/cysteine 480, and cysteine 474/cysteine 489. MAM domains are found at residues 492-647 (TDFE…DCNP), 654-813 (DQEV…PCWA), 812-973 (WAAK…PCAQ), and 972-1142 (AQPG…HCKQ). Asparagine 639 carries N-linked (GlcNAc...) asparagine glycosylation. N-linked (GlcNAc...) asparagine glycosylation is present at asparagine 839. A helical membrane pass occupies residues 1156–1176 (VPVAVGGALLLFLLLLGLGGW). Over 1177–1216 (HWLQKQHLPCQSTDAAASGFDNILFNADQVTLPESITSNP) the chain is Cytoplasmic.

As to expression, apical endosomal tubules of developing rat intestinal epithelial cells.

It localises to the membrane. Functionally, probably involved in the sorting and selective transport of receptors and ligands across polarized epithelia. This is Apical endosomal glycoprotein (Mamdc4) from Rattus norvegicus (Rat).